A 258-amino-acid chain; its full sequence is Aspartate/glutamate leucyltransferase (258 aa).

The protein belongs to the R-transferase family. Bpt subfamily.

It localises to the cytoplasm. It carries out the reaction N-terminal L-glutamyl-[protein] + L-leucyl-tRNA(Leu) = N-terminal L-leucyl-L-glutamyl-[protein] + tRNA(Leu) + H(+). The enzyme catalyses N-terminal L-aspartyl-[protein] + L-leucyl-tRNA(Leu) = N-terminal L-leucyl-L-aspartyl-[protein] + tRNA(Leu) + H(+). Functions in the N-end rule pathway of protein degradation where it conjugates Leu from its aminoacyl-tRNA to the N-termini of proteins containing an N-terminal aspartate or glutamate. In Rhodopseudomonas palustris (strain BisA53), this protein is Aspartate/glutamate leucyltransferase.